A 141-amino-acid polypeptide reads, in one-letter code: Large ribosomal subunit protein uL11 (141 aa).

Belongs to the universal ribosomal protein uL11 family. As to quaternary structure, part of the ribosomal stalk of the 50S ribosomal subunit. Interacts with L10 and the large rRNA to form the base of the stalk. L10 forms an elongated spine to which L12 dimers bind in a sequential fashion forming a multimeric L10(L12)X complex. In terms of processing, one or more lysine residues are methylated.

In terms of biological role, forms part of the ribosomal stalk which helps the ribosome interact with GTP-bound translation factors. This is Large ribosomal subunit protein uL11 from Clostridioides difficile (strain 630) (Peptoclostridium difficile).